A 311-amino-acid polypeptide reads, in one-letter code: Energy-coupling factor transporter ATP-binding protein EcfA (311 aa).

The 236-residue stretch at 2 to 237 (IELRDLSYSY…AELIRRASLR (236 aa)) folds into the ABC transporter domain. Residue 35–42 (GPNGAGKS) participates in ATP binding.

The protein belongs to the ABC transporter superfamily. Energy-coupling factor EcfA family. Forms a stable energy-coupling factor (ECF) transporter complex composed of 2 membrane-embedded substrate-binding proteins (S component), 2 ATP-binding proteins (A component) and 2 transmembrane proteins (T component).

The protein resides in the cell membrane. Its function is as follows. ATP-binding (A) component of a common energy-coupling factor (ECF) ABC-transporter complex. Unlike classic ABC transporters this ECF transporter provides the energy necessary to transport a number of different substrates. The sequence is that of Energy-coupling factor transporter ATP-binding protein EcfA from Methanothermobacter thermautotrophicus (strain ATCC 29096 / DSM 1053 / JCM 10044 / NBRC 100330 / Delta H) (Methanobacterium thermoautotrophicum).